The sequence spans 124 residues: UPF0102 protein Meso_4010 (124 aa).

It belongs to the UPF0102 family.

The polypeptide is UPF0102 protein Meso_4010 (Chelativorans sp. (strain BNC1)).